A 162-amino-acid chain; its full sequence is Regulator of ribonuclease activity A (162 aa).

Belongs to the RraA family. Homotrimer. Binds to both RNA-binding sites in the C-terminal region of Rne and to RhlB.

Its subcellular location is the cytoplasm. Its function is as follows. Globally modulates RNA abundance by binding to RNase E (Rne) and regulating its endonucleolytic activity. Can modulate Rne action in a substrate-dependent manner by altering the composition of the degradosome. Modulates RNA-binding and helicase activities of the degradosome. This chain is Regulator of ribonuclease activity A, found in Haemophilus influenzae (strain 86-028NP).